We begin with the raw amino-acid sequence, 496 residues long: Glycerol kinase (496 aa).

Thr-11 contacts ADP. Residues Thr-11, Thr-12, and Ser-13 each contribute to the ATP site. Sn-glycerol 3-phosphate is bound at residue Thr-11. ADP is bound at residue Arg-15. Sn-glycerol 3-phosphate contacts are provided by Arg-81, Glu-82, Tyr-133, and Asp-242. Glycerol contacts are provided by Arg-81, Glu-82, Tyr-133, Asp-242, and Gln-243. The ADP site is built by Thr-264 and Gly-307. Residues Thr-264, Gly-307, and Gln-311 each coordinate ATP. Residue Asn-413 coordinates ADP.

It belongs to the FGGY kinase family.

It carries out the reaction glycerol + ATP = sn-glycerol 3-phosphate + ADP + H(+). It participates in polyol metabolism; glycerol degradation via glycerol kinase pathway; sn-glycerol 3-phosphate from glycerol: step 1/1. Inhibited by fructose 1,6-bisphosphate (FBP). Functionally, key enzyme in the regulation of glycerol uptake and metabolism. Catalyzes the phosphorylation of glycerol to yield sn-glycerol 3-phosphate. This Borrelia duttonii (strain Ly) protein is Glycerol kinase.